The primary structure comprises 206 residues: Large ribosomal subunit protein uL4 (206 aa).

The segment at 63–97 is disordered; that stretch reads MYKQKGTGRARHHSARAPQFRGGGKAHGPVVRSHE. The span at 64–77 shows a compositional bias: basic residues; sequence YKQKGTGRARHHSA.

The protein belongs to the universal ribosomal protein uL4 family. As to quaternary structure, part of the 50S ribosomal subunit.

One of the primary rRNA binding proteins, this protein initially binds near the 5'-end of the 23S rRNA. It is important during the early stages of 50S assembly. It makes multiple contacts with different domains of the 23S rRNA in the assembled 50S subunit and ribosome. Its function is as follows. Forms part of the polypeptide exit tunnel. This chain is Large ribosomal subunit protein uL4, found in Rhizobium johnstonii (strain DSM 114642 / LMG 32736 / 3841) (Rhizobium leguminosarum bv. viciae).